The primary structure comprises 100 residues: Small ubiquitin-related modifier 1 (100 aa).

Residues 19-96 (EYIKLKVIGQ…IEVYQEQTGG (78 aa)) form the Ubiquitin-like domain. Residue glycine 96 forms a Glycyl lysine isopeptide (Gly-Lys) (interchain with K-? in acceptor proteins) linkage. A propeptide spanning residues 97–100 (CRND) is cleaved from the precursor.

Belongs to the ubiquitin family. SUMO subfamily. Interacts with sae2, ube2i, ranbp2, pias1 and pias2. Covalently attached to a number of proteins. Cleavage of precursor form by a sentrin-specific protease is necessary for function.

It localises to the nucleus membrane. The protein resides in the nucleus speckle. It is found in the cytoplasm. The protein localises to the nucleus. Its subcellular location is the PML body. It localises to the cell membrane. Its function is as follows. Ubiquitin-like protein that can be covalently attached to proteins as a monomer or a lysine-linked polymer. Covalent attachment via an isopeptide bond to its substrates requires prior activation by the E1 complex sae1-sae2 and linkage to the E2 enzyme ube2i. This post-translational modification on lysine residues of proteins plays a crucial role in a number of cellular processes such as nuclear transport, DNA replication and repair, mitosis and signal transduction. Polymeric sumo1 chains are also susceptible to polyubiquitination which functions as a signal for proteasomal degradation of modified proteins. In Danio rerio (Zebrafish), this protein is Small ubiquitin-related modifier 1 (sumo1).